The primary structure comprises 158 residues: 6,7-dimethyl-8-ribityllumazine synthase (158 aa).

5-amino-6-(D-ribitylamino)uracil contacts are provided by residues F23, 61 to 63 (SFE), and 85 to 87 (AVI). 90–91 (DT) is a (2S)-2-hydroxy-3-oxobutyl phosphate binding site. H93 acts as the Proton donor in catalysis. Residue F118 coordinates 5-amino-6-(D-ribitylamino)uracil. Residue R132 participates in (2S)-2-hydroxy-3-oxobutyl phosphate binding.

It belongs to the DMRL synthase family.

The catalysed reaction is (2S)-2-hydroxy-3-oxobutyl phosphate + 5-amino-6-(D-ribitylamino)uracil = 6,7-dimethyl-8-(1-D-ribityl)lumazine + phosphate + 2 H2O + H(+). It participates in cofactor biosynthesis; riboflavin biosynthesis; riboflavin from 2-hydroxy-3-oxobutyl phosphate and 5-amino-6-(D-ribitylamino)uracil: step 1/2. Its function is as follows. Catalyzes the formation of 6,7-dimethyl-8-ribityllumazine by condensation of 5-amino-6-(D-ribitylamino)uracil with 3,4-dihydroxy-2-butanone 4-phosphate. This is the penultimate step in the biosynthesis of riboflavin. The protein is 6,7-dimethyl-8-ribityllumazine synthase of Prochlorococcus marinus (strain NATL1A).